A 477-amino-acid polypeptide reads, in one-letter code: GTPase Der (477 aa).

EngA-type G domains lie at 3–167 and 206–382; these read LTIA…GKER and LRIA…RMWN. GTP is bound by residues 9-16, 56-60, 119-122, 212-219, 259-263, and 324-327; these read GRPNVGKS, DTAGL, NKSE, GRPNTGKS, and NKWD. A KH-like domain is found at 383 to 467; it reads RRISTAKLNR…PIRISLRASD (85 aa).

It belongs to the TRAFAC class TrmE-Era-EngA-EngB-Septin-like GTPase superfamily. EngA (Der) GTPase family. Associates with the 50S ribosomal subunit.

GTPase that plays an essential role in the late steps of ribosome biogenesis. The sequence is that of GTPase Der from Bartonella quintana (strain Toulouse) (Rochalimaea quintana).